A 246-amino-acid polypeptide reads, in one-letter code: NAD-dependent protein deacylase (246 aa).

Residues 1–245 enclose the Deacetylase sirtuin-type domain; it reads MKEFITKHRD…ELIREILDNP (245 aa). 20-39 contacts NAD(+); it reads GAGISAESGIPTFRGSEGLW. Substrate is bound by residues Tyr-64 and Arg-67. 98-101 serves as a coordination point for NAD(+); the sequence is QNVD. Residue His-116 is the Proton acceptor of the active site. The Zn(2+) site is built by Cys-124, Cys-127, Cys-146, and Cys-149. NAD(+)-binding positions include 186–188, 212–214, and Thr-230; these read GTS and NPE.

It belongs to the sirtuin family. Class III subfamily. Requires Zn(2+) as cofactor.

It is found in the cytoplasm. It carries out the reaction N(6)-acetyl-L-lysyl-[protein] + NAD(+) + H2O = 2''-O-acetyl-ADP-D-ribose + nicotinamide + L-lysyl-[protein]. The catalysed reaction is N(6)-succinyl-L-lysyl-[protein] + NAD(+) + H2O = 2''-O-succinyl-ADP-D-ribose + nicotinamide + L-lysyl-[protein]. Its function is as follows. NAD-dependent lysine deacetylase and desuccinylase that specifically removes acetyl and succinyl groups on target proteins. Modulates the activities of several proteins which are inactive in their acylated form. The sequence is that of NAD-dependent protein deacylase from Leptospira interrogans serogroup Icterohaemorrhagiae serovar copenhageni (strain Fiocruz L1-130).